Consider the following 164-residue polypeptide: Heat shock protein beta-6 (164 aa).

Residues 1–72 are involved in stabilization of the HSPB1:HSBP6 heterodimer; the sequence is MEIPVSVQPS…PTAQVSTDPG (72 aa). Ser-16 is modified (phosphoserine). In terms of domain architecture, sHSP spans 56 to 163; the sequence is RAPSVALPTA…PLQSPPGAAA (108 aa). Deamidated glutamine is present on Gln-66. Ser-157 is subject to Phosphoserine.

It belongs to the small heat shock protein (HSP20) family. As to quaternary structure, homodimer. Small heat shock proteins form high molecular mass oligomers containing variable number of monomers; these oligomers display a very flexible quaternary structure easily exchanging their subunits. Heterooligomer with HSPB1; formed through oligomerization of HSPB1:HSBP6 dimers; subunit exchange leads to formation of at least two different heterooligomeric complexes, differing in variable quantities of HSPB1 and HSPB6 homodimers in addition to HSPB1:HSPB6 heterodimers. Heterooligomer with CRYAB; large heterooligomers consist of CRYAB homodimers and HSPB5:HSPB6 heterodimers but lacking HSPB6 homodimers. Interacts with BAG3. Interacts (phosphorylated) with YWHAZ. Interacts with PDE4A and PDE4D; required for maintenance of the non-phosphorylated state of HSPB6 under basal conditions. Interacts with KDR. Interacts with PRKD1. Post-translationally, phosphorylated at Ser-16 by PKA and probably PKD1K; required to protect cardiomyocytes from apoptosis.

It is found in the cytoplasm. The protein resides in the nucleus. Its subcellular location is the secreted. Its function is as follows. Small heat shock protein which functions as a molecular chaperone probably maintaining denatured proteins in a folding-competent state. Seems to have versatile functions in various biological processes. Plays a role in regulating muscle function such as smooth muscle vasorelaxation and cardiac myocyte contractility. May regulate myocardial angiogenesis implicating KDR. Overexpression mediates cardioprotection and angiogenesis after induced damage. Stabilizes monomeric YWHAZ thereby supporting YWHAZ chaperone-like activity. The polypeptide is Heat shock protein beta-6 (HSPB6) (Bos taurus (Bovine)).